A 278-amino-acid chain; its full sequence is HTH-type transcriptional activator RhaS (278 aa).

The region spanning 174-272 (NLLLAWLEDH…NWSPRDIRQG (99 aa)) is the HTH araC/xylS-type domain. DNA-binding regions (H-T-H motif) lie at residues 191–212 (DAVA…KQQT) and 239–262 (VTDI…RREF).

In terms of assembly, binds DNA as a dimer.

Its subcellular location is the cytoplasm. Activates expression of the rhaBAD and rhaT operons. This is HTH-type transcriptional activator RhaS from Shigella dysenteriae serotype 1 (strain Sd197).